The following is a 275-amino-acid chain: Large ribosomal subunit protein uL2 (275 aa).

Polar residues predominate over residues 36–49 (TQSSTAGRNNNGRI). Disordered stretches follow at residues 36–59 (TQSSTAGRNNNGRITTRHKGGGHK) and 224–275 (AMNP…RHKR). Over residues 50–59 (TTRHKGGGHK) the composition is skewed to basic residues.

Belongs to the universal ribosomal protein uL2 family. Part of the 50S ribosomal subunit. Forms a bridge to the 30S subunit in the 70S ribosome.

One of the primary rRNA binding proteins. Required for association of the 30S and 50S subunits to form the 70S ribosome, for tRNA binding and peptide bond formation. It has been suggested to have peptidyltransferase activity; this is somewhat controversial. Makes several contacts with the 16S rRNA in the 70S ribosome. The polypeptide is Large ribosomal subunit protein uL2 (Burkholderia vietnamiensis (strain G4 / LMG 22486) (Burkholderia cepacia (strain R1808))).